Consider the following 316-residue polypeptide: METWQELKVTVKREGEELVSNLLIELGAQGVAIEDSMDYVGNVDRFGEIFPEVEQQEEIVVTAYYPETVDVATVESDLQARLAELTDFMDLGEVKMGTTALAEEDWADNWKKYYEPARITHDLTIVPSWTDYEATAGEMIIKLDPGMAFGTGTHPTTKMSLFALEQVLRGGETVLDVGTGSGVLSIASSLLGAKEIFAYDLDDVAVRVAQENIELNPGMENIHVAAGDLLKGVEIEADVIVANILADILIHLIDDAYRLVKDEGYLIMSGIIKDKWDMVRESAESAGFFLETHMVQGEWNTCVFKKTKDISGVIGG.

S-adenosyl-L-methionine is bound by residues Thr-157, Gly-178, Asp-200, and Asn-243.

Belongs to the methyltransferase superfamily. PrmA family.

It is found in the cytoplasm. It carries out the reaction L-lysyl-[protein] + 3 S-adenosyl-L-methionine = N(6),N(6),N(6)-trimethyl-L-lysyl-[protein] + 3 S-adenosyl-L-homocysteine + 3 H(+). In terms of biological role, methylates ribosomal protein L11. The sequence is that of Ribosomal protein L11 methyltransferase from Streptococcus pneumoniae (strain Hungary19A-6).